Consider the following 180-residue polypeptide: Major urinary protein 5 (180 aa).

The N-terminal stretch at 1 to 18 (MKLLLLLCLELTLVYVHA) is a signal peptide. C82 and C175 are disulfide-bonded.

This sequence belongs to the calycin superfamily. Lipocalin family.

It is found in the secreted. Major urinary proteins (Mups) bind pheromones, and thus stabilize them to allow slow release into the air from urine marks. May protect pheromones from oxidation. May also act as pheromones themselves. In this context, they play a role in the regulation of social behaviors, such as aggression, mating, pup-suckling, territory establishment and dominance. This is Major urinary protein 5 from Mus musculus (Mouse).